Here is a 442-residue protein sequence, read N- to C-terminus: Chromosomal replication initiator protein DnaA (442 aa).

Residues 1-75 are domain I, interacts with DnaA modulators; the sequence is MDAWPRCLER…GNGEVALAVG (75 aa). Residues 75-104 are domain II; that stretch reads GSRPRAPEPAPAPVAATIAPQAAPIAPFAG. The domain III, AAA+ region stretch occupies residues 105–322; the sequence is NLDSHYTFAN…GALNTLVARA (218 aa). Residues glycine 150, glycine 152, lysine 153, and threonine 154 each coordinate ATP. The tract at residues 323-442 is domain IV, binds dsDNA; the sequence is NFTGRSITVE…WEKLIRKLSE (120 aa).

It belongs to the DnaA family. As to quaternary structure, oligomerizes as a right-handed, spiral filament on DNA at oriC.

The protein localises to the cytoplasm. Its function is as follows. Plays an essential role in the initiation and regulation of chromosomal replication. ATP-DnaA binds to the origin of replication (oriC) to initiate formation of the DNA replication initiation complex once per cell cycle. Binds the DnaA box (a 9 base pair repeat at the origin) and separates the double-stranded (ds)DNA. Forms a right-handed helical filament on oriC DNA; dsDNA binds to the exterior of the filament while single-stranded (ss)DNA is stabiized in the filament's interior. The ATP-DnaA-oriC complex binds and stabilizes one strand of the AT-rich DNA unwinding element (DUE), permitting loading of DNA polymerase. After initiation quickly degrades to an ADP-DnaA complex that is not apt for DNA replication. Binds acidic phospholipids. The sequence is that of Chromosomal replication initiator protein DnaA from Xanthomonas oryzae pv. oryzae (strain PXO99A).